The primary structure comprises 325 residues: Elongation factor P--(R)-beta-lysine ligase (325 aa).

76-78 (SPE) provides a ligand contact to substrate. ATP is bound by residues 100–102 (RNE) and N109. Y118 provides a ligand contact to substrate. 244–245 (EL) contributes to the ATP binding site. Position 251 (E251) interacts with substrate. G300 contacts ATP.

Belongs to the class-II aminoacyl-tRNA synthetase family. EpmA subfamily. Homodimer.

It catalyses the reaction D-beta-lysine + L-lysyl-[protein] + ATP = N(6)-((3R)-3,6-diaminohexanoyl)-L-lysyl-[protein] + AMP + diphosphate + H(+). With EpmB is involved in the beta-lysylation step of the post-translational modification of translation elongation factor P (EF-P). Catalyzes the ATP-dependent activation of (R)-beta-lysine produced by EpmB, forming a lysyl-adenylate, from which the beta-lysyl moiety is then transferred to the epsilon-amino group of a conserved specific lysine residue in EF-P. This chain is Elongation factor P--(R)-beta-lysine ligase, found in Sodalis glossinidius (strain morsitans).